Consider the following 284-residue polypeptide: Pantothenate synthetase (284 aa).

Met30 to His37 lines the ATP pocket. Catalysis depends on His37, which acts as the Proton donor. Position 61 (Gln61) interacts with (R)-pantoate. Beta-alanine is bound at residue Gln61. Gly149 to Asp152 serves as a coordination point for ATP. Position 155 (Gln155) interacts with (R)-pantoate. Residues Ile178 and Leu186–Arg189 contribute to the ATP site.

Belongs to the pantothenate synthetase family. Homodimer.

The protein resides in the cytoplasm. The catalysed reaction is (R)-pantoate + beta-alanine + ATP = (R)-pantothenate + AMP + diphosphate + H(+). It functions in the pathway cofactor biosynthesis; (R)-pantothenate biosynthesis; (R)-pantothenate from (R)-pantoate and beta-alanine: step 1/1. Catalyzes the condensation of pantoate with beta-alanine in an ATP-dependent reaction via a pantoyl-adenylate intermediate. The sequence is that of Pantothenate synthetase from Salmonella paratyphi B (strain ATCC BAA-1250 / SPB7).